Consider the following 98-residue polypeptide: Large ribosomal subunit protein uL23 (98 aa).

The protein belongs to the universal ribosomal protein uL23 family. Part of the 50S ribosomal subunit. Contacts protein L29, and trigger factor when it is bound to the ribosome.

In terms of biological role, one of the early assembly proteins it binds 23S rRNA. One of the proteins that surrounds the polypeptide exit tunnel on the outside of the ribosome. Forms the main docking site for trigger factor binding to the ribosome. The protein is Large ribosomal subunit protein uL23 of Jannaschia sp. (strain CCS1).